The sequence spans 673 residues: Polyadenylate-binding protein, cytoplasmic and nuclear (673 aa).

The tract at residues 1-39 is disordered; that stretch reads MSAETATSPAPAAETPVAPAPATQTTPAEGAPTPAAAAP. RRM domains follow at residues 46 to 124, 134 to 211, 227 to 304, and 330 to 407; these read ASLY…WSQR, GNIF…HHVG, TNVY…RAQT, and VNLY…LAQR. Residues 300–322 are disordered; the sequence is GRAQTKSEREAELKKSHEEKRLE. A compositionally biased stretch (basic and acidic residues) spans 304–322; that stretch reads TKSEREAELKKSHEEKRLE. 2 disordered regions span residues 509-572 and 644-673; these read APGY…AGRL and WGKD…EKKE. Residues 569–646 form the PABC domain; that stretch reads AGRLDAQSLA…ALRVLAEWGK (78 aa).

The protein belongs to the polyadenylate-binding protein type-1 family.

The protein resides in the cytoplasm. It is found in the nucleus. Functionally, binds the poly(A) tail of mRNA. Appears to be an important mediator of the multiple roles of the poly(A) tail in mRNA biogenesis, stability and translation. In the nucleus, involved in both mRNA cleavage and polyadenylation. Is also required for efficient mRNA export to the cytoplasm. Acts in concert with a poly(A)-specific nuclease (PAN) to affect poly(A) tail shortening, which may occur concomitantly with either nucleocytoplasmic mRNA transport or translational initiation. In the cytoplasm, stimulates translation initiation and regulates mRNA decay through translation termination-coupled poly(A) shortening, probably mediated by PAN. The polypeptide is Polyadenylate-binding protein, cytoplasmic and nuclear (PAB1) (Cryptococcus neoformans var. neoformans serotype D (strain B-3501A) (Filobasidiella neoformans)).